We begin with the raw amino-acid sequence, 297 residues long: MKSLLAIYPGSIVSEELCIREGCLCFFDESNQRYISIPKTEISEKEVLVLQSFLTPADEGNQLSMKSPEENKWFSFLFSRGELPAYIKKRTRFVHFHLFGKIERTSFTEAVRHFWPVSFVIVWIHEDRGVIVEQESEAAAEKDELESLAKVLESDFYFSVRFYAGRFYEPDECLRKHYAREQAYFLFAEKRLPQVQSVTFEMIFPFLLLETEKEKLETLLSEEAELLFGSESELRKTIKLFIENNSNVTLTAKKLHLHRNSLQYRIDKFIERSGIDIKSYKGALLAYFICLQNESSE.

Positions 128–156 (RGVIVEQESEAAAEKDELESLAKVLESDF) form a coiled coil.

This is an uncharacterized protein from Bacillus subtilis (strain 168).